Consider the following 794-residue polypeptide: Furin (794 aa).

Residues 1 to 26 form the signal peptide; that stretch reads MELRPWLLWVVAATGTLVLLAADAQG. A propeptide spans 27–107 (inhibition peptide); sequence QKVFTNTWAV…QQVAKRRTKR (81 aa). The Lumenal segment spans residues 108 to 715; the sequence is DVYQEPTDPK…AGLLPSHLPE (608 aa). Asp-115 provides a ligand contact to Ca(2+). The region spanning 121 to 435 is the Peptidase S8 domain; it reads QWYLSGVTQR…YGLLDAGAMV (315 aa). Asp-153 (charge relay system) is an active-site residue. Position 154 (Asp-154) interacts with substrate. Ca(2+) is bound by residues Asp-162, Asp-174, Asp-179, and Asp-181. The segment at 162–183 is disordered; it reads DLAGNYDPGASFDVNDQDPDPQ. Substrate is bound at residue 191–192; sequence DN. His-194 serves as the catalytic Charge relay system. Positions 205, 208, 210, and 212 each coordinate Ca(2+). 2 cysteine pairs are disulfide-bonded: Cys-211-Cys-360 and Cys-303-Cys-333. Residues Glu-236, 253-258, Asp-264, and 292-295 each bind substrate; these read SWGPED and ASGN. Ca(2+) is bound at residue Asp-258. Residue Asp-301 coordinates Ca(2+). 2 residues coordinate substrate: Asp-306 and Tyr-308. Glu-331 contacts Ca(2+). Ser-368 acts as the Charge relay system in catalysis. Ser-368 serves as a coordination point for substrate. Residues Asn-387 and Asn-440 are each glycosylated (N-linked (GlcNAc...) asparagine). The P/Homo B domain occupies 444–576; that stretch reads VAPQRKCIID…TLVLYGTAPE (133 aa). Cys-450 and Cys-474 are oxidised to a cystine. The short motif at 498 to 500 is the Cell attachment site element; the sequence is RGD. Asn-553 is a glycosylation site (N-linked (GlcNAc...) asparagine). FU repeat units follow at residues 577–620 and 638–681; these read GLPV…GFAP and ASVC…QSQS. Positions 673 to 696 are disordered; the sequence is QTCSRQSQSSRESPPQQQPPRLPP. Residues 676–687 show a composition bias toward low complexity; it reads SRQSQSSRESPP. A helical membrane pass occupies residues 716-738; that stretch reads VVAGLSCAFIVLVFVTVFLVLQL. Residues 739-794 are Cytoplasmic-facing; sequence RSGFSFRGVKVYTMDRGLISYKGLPPEAWQEECPSDSEEDEGRGERTAFIKDQSAL. The segment at 759–762 is cell surface signal; that stretch reads YKGL. The span at 767 to 780 shows a compositional bias: acidic residues; that stretch reads WQEECPSDSEEDEG. Positions 767-794 are disordered; it reads WQEECPSDSEEDEGRGERTAFIKDQSAL. A phosphoserine; by CK2 mark is found at Ser-773 and Ser-775. Positions 773–779 match the Trans Golgi network signal motif; the sequence is SDSEEDE.

This sequence belongs to the peptidase S8 family. Furin subfamily. In terms of assembly, interacts with FLNA. Binds to PACS1 which mediates TGN localization and connection to clathrin adapters. Interacts with LAMP1, LAMP2 and LAMP3. Requires Ca(2+) as cofactor. Post-translationally, the inhibition peptide, which plays the role of an intramolecular chaperone, is autocatalytically removed in the endoplasmic reticulum (ER) and remains non-covalently bound to furin as a potent autoinhibitor. Following transport to the trans Golgi, a second cleavage within the inhibition propeptide results in propeptide dissociation and furin activation. In terms of processing, phosphorylation is required for TGN localization of the endoprotease. In vivo, exists as di-, mono- and non-phosphorylated forms. As to expression, seems to be expressed ubiquitously.

It is found in the golgi apparatus. Its subcellular location is the trans-Golgi network membrane. The protein localises to the cell membrane. It localises to the secreted. The protein resides in the endosome membrane. The enzyme catalyses Release of mature proteins from their proproteins by cleavage of -Arg-Xaa-Yaa-Arg-|-Zaa- bonds, where Xaa can be any amino acid and Yaa is Arg or Lys. Releases albumin, complement component C3 and von Willebrand factor from their respective precursors.. With respect to regulation, inhibited by the not secondly cleaved propeptide. Inhibited by m-guanidinomethyl-phenylacetyl-Arg-Val-Arg-(amidomethyl)-benzamidine (m-guanidinomethyl-Phac-RVR-Amb) and 4-guanidinomethyl-phenylacetyl-Arg-Tle-Arg-4-amidinobenzylamide (MI-1148). Inhibited by Decanoyl-Arg-Val-Lys-Arg-chloromethylketone (decanoyl-RVKR-CMK). Inhibited by heparin/heparan sulfate-binding. Ubiquitous endoprotease within constitutive secretory pathways capable of cleavage at the RX(K/R)R consensus motif. Mediates processing of TGFB1, an essential step in TGF-beta-1 activation. Converts through proteolytic cleavage the non-functional Brain natriuretic factor prohormone into its active hormone BNP(1-32). By mediating processing of accessory subunit ATP6AP1/Ac45 of the V-ATPase, regulates the acidification of dense-core secretory granules in islets of Langerhans cells. Functionally, (Microbial infection) Cleaves and activates diphtheria toxin DT. Its function is as follows. (Microbial infection) Cleaves and activates anthrax toxin protective antigen (PA). In terms of biological role, (Microbial infection) Cleaves and activates HIV-1 virus Envelope glycoprotein gp160. (Microbial infection) Required for H7N1 and H5N1 influenza virus infection probably by cleaving hemagglutinin. Functionally, (Microbial infection) Able to cleave S.pneumoniae serine-rich repeat protein PsrP. Its function is as follows. (Microbial infection) Facilitates human coronaviruses EMC and SARS-CoV-2 infections by proteolytically cleaving the spike protein at the monobasic S1/S2 cleavage site. This cleavage is essential for spike protein-mediated cell-cell fusion and entry into human lung cells. In terms of biological role, (Microbial infection) Facilitates mumps virus infection by proteolytically cleaving the viral fusion protein F. In Homo sapiens (Human), this protein is Furin.